The chain runs to 215 residues: 3-demethoxyubiquinol 3-hydroxylase (215 aa).

Residues Glu-64, Glu-94, His-97, Glu-146, Glu-178, and His-181 each contribute to the Fe cation site.

Belongs to the COQ7 family. Fe cation serves as cofactor.

The protein localises to the cell membrane. The catalysed reaction is a 5-methoxy-2-methyl-3-(all-trans-polyprenyl)benzene-1,4-diol + AH2 + O2 = a 3-demethylubiquinol + A + H2O. Its pathway is cofactor biosynthesis; ubiquinone biosynthesis. Catalyzes the hydroxylation of 2-nonaprenyl-3-methyl-6-methoxy-1,4-benzoquinol during ubiquinone biosynthesis. In Pseudomonas fluorescens (strain Pf0-1), this protein is 3-demethoxyubiquinol 3-hydroxylase.